The following is a 425-amino-acid chain: Alpha/beta hydrolase xenA (425 aa).

Residue aspartate 366 is part of the active site.

The protein belongs to the AB hydrolase superfamily. FUS2 hydrolase family. In terms of assembly, homodimer.

It participates in mycotoxin biosynthesis. Alpha/beta hydrolase; part of the gene cluster that mediates the biosynthesis of xenoacremones such as xenoacremone A, a compound that shows inhibitory activity toward the PI3K/AKT signaling pathway and which has the ability to induce apoptosis of A549 lung cancer cells. Within the pathway, cooperation of the hybrid PKS-NRPS xenE and the trans-acting enoyl reductase xenG is responsible for the formation of the reduced tyrosine-nonaketide derivative. The alpha/beta hydrolase xenA then accelerates intramolecular nucleophilic attack to give a pyrrolidone derivative. Subsequently, three enzymes, xenF, xenD, and xenC, coordinately participate in the conversion to xenoacremone B. XenF catalyzes sigmatropic rearrangement to form an A-ring, which leads to an unusual intermediate with a hexane ring, which is required for the formation of the tricarbocyclic product. Epoxidation catalyzed by xenD and the formation of the paracyclophane ether catalyzed by xenC initiate a spontaneous intramolecular Diels-Alder (IMDA) reaction to yield xenoacremone B. Spontaneous hydration of xenoacremone B leads to the formation of xenoacremone A, which undergoes subsequent methylation to afford xenoacremone C. The sequence is that of Alpha/beta hydrolase xenA from Xenoacremonium sinensis (Endophyte fungus).